The sequence spans 450 residues: UDP-N-acetylmuramoylalanine--D-glutamate ligase (450 aa).

119-125 (GTNGKTT) lines the ATP pocket.

This sequence belongs to the MurCDEF family.

The protein resides in the cytoplasm. It catalyses the reaction UDP-N-acetyl-alpha-D-muramoyl-L-alanine + D-glutamate + ATP = UDP-N-acetyl-alpha-D-muramoyl-L-alanyl-D-glutamate + ADP + phosphate + H(+). The protein operates within cell wall biogenesis; peptidoglycan biosynthesis. Its function is as follows. Cell wall formation. Catalyzes the addition of glutamate to the nucleotide precursor UDP-N-acetylmuramoyl-L-alanine (UMA). The chain is UDP-N-acetylmuramoylalanine--D-glutamate ligase from Lactococcus lactis subsp. lactis (strain IL1403) (Streptococcus lactis).